The chain runs to 145 residues: Anaerobic nitrite reductase NSHB5 (145 aa).

Residues 2-142 (GFSETQEELV…LAAAIKEEMK (141 aa)) enclose the Globin domain. The short motif at 35-39 (EIAPA) is the Homodimerization element. Residues S45, H59, K61, R84, T88, and H89 each coordinate heme b. A Homodimerization motif is present at residues 96–108 (DAHFEVVKTALLD).

Belongs to the plant globin family. Homodimer. Requires heme b as cofactor. In terms of tissue distribution, expressed in embryonic (embryos, coleoptiles and seminal roots) and vegetative (leaves and roots) organs.

It localises to the cytoplasm. Its subcellular location is the nucleus. The catalysed reaction is Fe(III)-heme b-[protein] + nitric oxide + H2O = Fe(II)-heme b-[protein] + nitrite + 2 H(+). In terms of biological role, phytoglobin that reduces nitrite to nitric oxide under anoxic conditions (e.g. during flooding or in waterlogged soil). May not function as an oxygen storage or transport protein. Has an unusually high affinity for O(2) through an hexacoordinate heme iron because of a very low dissociation constant. This Oryza sativa subsp. indica (Rice) protein is Anaerobic nitrite reductase NSHB5.